The sequence spans 795 residues: Protein Jade-3 (795 aa).

Residues 1 to 25 (MKRLRTPSSSDSSDNESPSTSFSSN) are compositionally biased toward low complexity. Residues 1–41 (MKRLRTPSSSDSSDNESPSTSFSSNKYGSKPGTPASAQKKP) form a disordered region. A PHD-type 1 zinc finger spans residues 201 to 251 (DVICDVCRSPDSEEGNDMVFCDKCNICVHQACYGIVKVPDGNWLCRTCVLG). The segment at 253 to 287 (TPQCLLCPKTGGAMKATRAGTKWAHVSCALWIPEV) adopts a C2HC pre-PHD-type zinc-finger fold. The PHD-type 2 zinc-finger motif lies at 311-367 (LICSLCKLKTGACIQCSVKNCTIPFHVTCAFEHSLEMKTILDEGDEVKFKSYCLKHS). Disordered regions lie at residues 630–654 (HGQS…NGIL), 667–687 (AASE…SGFH), and 714–795 (FEKN…SVQR). 2 stretches are compositionally biased toward polar residues: residues 678-687 (SGKSQSSGFH) and 720-732 (KSSG…STER).

This sequence belongs to the JADE family. As to quaternary structure, component of the HBO1 complex.

Its function is as follows. Scaffold subunit of some HBO1 complexes, which have a histone H4 acetyltransferase activity. In Danio rerio (Zebrafish), this protein is Protein Jade-3 (jade3).